We begin with the raw amino-acid sequence, 72 residues long: SPbeta prophage-derived uncharacterized protein YoqN (72 aa).

The protein is SPbeta prophage-derived uncharacterized protein YoqN (yoqN) of Bacillus subtilis (strain 168).